The sequence spans 72 residues: SRY-related protein MG42 (72 aa).

Residues 1 to 69 constitute a DNA-binding region (HMG box); the sequence is VKRPMNAFMV…KHMADYPNYK (69 aa).

Its subcellular location is the nucleus. In Tarentola mauritanica (Common wall gecko), this protein is SRY-related protein MG42.